The primary structure comprises 174 residues: uncharacterized protein (174 aa).

Positions 1 to 31 (MCCVYRMNRPASGLTVVFCGKLSGKPGPKSA) are cleaved as a signal peptide. Positions 39–59 (KSGADDGGENPRFFSAGPRTE) are disordered.

This is an uncharacterized protein from Escherichia coli (strain K12).